The primary structure comprises 270 residues: Putative phosphoenolpyruvate synthase regulatory protein (270 aa).

151–158 contacts ADP; it reads GVSRCGKT.

This sequence belongs to the pyruvate, phosphate/water dikinase regulatory protein family. PSRP subfamily.

The catalysed reaction is [pyruvate, water dikinase] + ADP = [pyruvate, water dikinase]-phosphate + AMP + H(+). It carries out the reaction [pyruvate, water dikinase]-phosphate + phosphate + H(+) = [pyruvate, water dikinase] + diphosphate. In terms of biological role, bifunctional serine/threonine kinase and phosphorylase involved in the regulation of the phosphoenolpyruvate synthase (PEPS) by catalyzing its phosphorylation/dephosphorylation. The sequence is that of Putative phosphoenolpyruvate synthase regulatory protein from Methylobacillus flagellatus (strain ATCC 51484 / DSM 6875 / VKM B-1610 / KT).